The following is a 254-amino-acid chain: Type III pantothenate kinase (254 aa).

Residue 13-20 participates in ATP binding; sequence MIGNTRQH. Substrate is bound by residues Tyr84 and 88–91; that span reads GLDR. Residue Asp90 is the Proton acceptor of the active site. Position 110 (Asp110) interacts with K(+). Thr113 lines the ATP pocket. Substrate is bound at residue Thr166.

It belongs to the type III pantothenate kinase family. As to quaternary structure, homodimer. Requires NH4(+) as cofactor. K(+) is required as a cofactor.

Its subcellular location is the cytoplasm. It catalyses the reaction (R)-pantothenate + ATP = (R)-4'-phosphopantothenate + ADP + H(+). The protein operates within cofactor biosynthesis; coenzyme A biosynthesis; CoA from (R)-pantothenate: step 1/5. Catalyzes the phosphorylation of pantothenate (Pan), the first step in CoA biosynthesis. The sequence is that of Type III pantothenate kinase from Thermosynechococcus vestitus (strain NIES-2133 / IAM M-273 / BP-1).